Reading from the N-terminus, the 320-residue chain is Protein EI24 homolog (320 aa).

3 consecutive transmembrane segments (helical) span residues 41 to 61 (QCFLLNGLIFLGSLGVFKWFI), 94 to 114 (GLLQLFYVFWFYPLYMLSFIL), and 175 to 195 (ILLLTFFFLEVCVVGVIPYIG). Asn217 carries N-linked (GlcNAc...) asparagine glycosylation. 3 helical membrane-spanning segments follow: residues 227–247 (LDFFQSNWAFFAGFGSPCVLA), 248–268 (IFFLSPLVSGALMAILFPLFV), and 292–312 (LGKLPIFYIADTLSMLALSIF).

This sequence belongs to the EI24 (TC 9.B.7) family.

Its subcellular location is the membrane. This Arabidopsis thaliana (Mouse-ear cress) protein is Protein EI24 homolog.